We begin with the raw amino-acid sequence, 740 residues long: Transcription activator of gluconeogenesis NCU03938 (740 aa).

The disordered stretch occupies residues 1 to 66 (MPDDVGPAEA…KYDPKDPLRP (66 aa)). The segment covering 19–37 (SDNEYDETEVTTKDDDDEK) has biased composition (acidic residues). A compositionally biased stretch (basic and acidic residues) spans 52 to 65 (GDQKKKYDPKDPLR). A DNA-binding region (zn(2)-C6 fungal-type) is located at residues 75–103 (CYACQRAHLTCGDERPCQRCIKRGLAEAC). Disordered stretches follow at residues 333 to 405 (PAGP…RQRD), 532 to 579 (NSDT…KEQP), and 639 to 674 (APTA…PTGV). The segment covering 337-351 (TSLQSPSTENNSPQP) has biased composition (polar residues). A PAS domain is found at 475–546 (ALFEHEEFMH…SISSKGGRGG (72 aa)). Positions 639 to 658 (APTASGGSGSSNGTVVNGGP) are enriched in low complexity.

The protein belongs to the ERT1/acuK family.

It localises to the nucleus. In terms of biological role, transcription factor which regulates nonfermentable carbon utilization. Activator of gluconeogenetic genes. This Neurospora crassa (strain ATCC 24698 / 74-OR23-1A / CBS 708.71 / DSM 1257 / FGSC 987) protein is Transcription activator of gluconeogenesis NCU03938.